Here is a 154-residue protein sequence, read N- to C-terminus: Iron-sulfur cluster assembly 2 homolog, mitochondrial (154 aa).

The N-terminal 8 residues, 1–8, are a transit peptide targeting the mitochondrion; it reads MAAARGLS. Fe cation-binding residues include cysteine 79, cysteine 144, and cysteine 146.

Belongs to the HesB/IscA family. In terms of assembly, heterotetramer; forms a dimer of dimers with IBA57. Interacts with [2Fe-2S]-ISCA2 forming the heterodimer [2Fe- 2S]-ISCA2-IBA57 complex; [2Fe-2S] cluster binding is absolutely required to promote the complex formation.

The protein localises to the mitochondrion. Involved in the maturation of mitochondrial 4Fe-4S proteins functioning late in the iron-sulfur cluster assembly pathway. May be involved in the binding of an intermediate of Fe/S cluster assembly. This Pongo abelii (Sumatran orangutan) protein is Iron-sulfur cluster assembly 2 homolog, mitochondrial (ISCA2).